A 513-amino-acid polypeptide reads, in one-letter code: Histidine ammonia-lyase (513 aa).

The 5-imidazolinone (Ala-Gly) cross-link spans 143–145 (ASG). Ser-144 is subject to 2,3-didehydroalanine (Ser).

Belongs to the PAL/histidase family. In terms of processing, contains an active site 4-methylidene-imidazol-5-one (MIO), which is formed autocatalytically by cyclization and dehydration of residues Ala-Ser-Gly.

It is found in the cytoplasm. It catalyses the reaction L-histidine = trans-urocanate + NH4(+). It functions in the pathway amino-acid degradation; L-histidine degradation into L-glutamate; N-formimidoyl-L-glutamate from L-histidine: step 1/3. In Paracoccus denitrificans (strain Pd 1222), this protein is Histidine ammonia-lyase.